The following is a 567-amino-acid chain: Geraniol synthase, chloroplastic (567 aa).

A chloroplast-targeting transit peptide spans 1–63; the sequence is MSCARITVTL…GDNSQRKNTR (63 aa). Positions 48–75 are disordered; it reads STPLINGDNSQRKNTRQHMEESSSKRRE. Residues 64 to 75 show a composition bias toward basic and acidic residues; that stretch reads QHMEESSSKRRE. Arg286, Asp323, Asp327, Arg466, and Asp469 together coordinate (2E)-geranyl diphosphate. The Mn(2+) site is built by Asp323 and Asp327. The DDXXD motif signature appears at 323-327; the sequence is DDIFD. Mn(2+)-binding residues include Asp469, Thr473, and Glu477.

Belongs to the terpene synthase family. Tpsb subfamily. As to quaternary structure, homodimer. Mn(2+) serves as cofactor. As to expression, expressed in the peltate glandular trichomes of the leaves.

Its subcellular location is the plastid. It localises to the chloroplast. The catalysed reaction is (2E)-geranyl diphosphate + H2O = (2E)-geraniol + diphosphate. The protein operates within secondary metabolite biosynthesis; terpenoid biosynthesis. Functionally, monoterpene synthase that catalyzes the formation of geraniol from geranyl diphosphate. The polypeptide is Geraniol synthase, chloroplastic (GES) (Ocimum basilicum (Sweet basil)).